A 681-amino-acid polypeptide reads, in one-letter code: Spermatogenesis-associated protein 21 (681 aa).

Over residues 1-14 (MENRNTHTHPESKA) the composition is skewed to basic and acidic residues. Disordered stretches follow at residues 1–284 (MENR…ANSR) and 298–336 (EEATHRRTLKSRGLTARRSPKTVTSVSTSGPISSSVPTL). 2 stretches are compositionally biased toward polar residues: residues 83–94 (QEPSARPRTTQD) and 159–173 (PSNSRSQPLKNNSPS). Basic and acidic residues predominate over residues 251 to 261 (PEERDTEKKEL). Polar residues predominate over residues 264–281 (GQKQRQQALSAAGTQGPA). The segment covering 319–335 (TVTSVSTSGPISSSVPT) has biased composition (low complexity). The region spanning 464-499 (FTPAQVEEALMSADVNGDGHVDFKDFLAVMTDTKRF) is the EF-hand domain. Ca(2+)-binding residues include aspartate 477, asparagine 479, aspartate 481, histidine 483, and aspartate 488. The tract at residues 653-681 (LFFQPGQQGSREHSSDSRKWLSSMPARTH) is disordered. Residues 662–671 (SREHSSDSRK) are compositionally biased toward basic and acidic residues.

Functionally, involved in the differentiation of haploid spermatids. The protein is Spermatogenesis-associated protein 21 (Spata21) of Mus musculus (Mouse).